A 282-amino-acid chain; its full sequence is NADPH-dependent 7-cyano-7-deazaguanine reductase (282 aa).

88–90 (IES) lines the substrate pocket. 90 to 91 (SK) contacts NADPH. Residue cysteine 190 is the Thioimide intermediate of the active site. Aspartate 197 functions as the Proton donor in the catalytic mechanism. A substrate-binding site is contributed by 229-230 (HE). NADPH is bound at residue 258–259 (RG).

It belongs to the GTP cyclohydrolase I family. QueF type 2 subfamily. Homodimer.

Its subcellular location is the cytoplasm. The enzyme catalyses 7-aminomethyl-7-carbaguanine + 2 NADP(+) = 7-cyano-7-deazaguanine + 2 NADPH + 3 H(+). It participates in tRNA modification; tRNA-queuosine biosynthesis. In terms of biological role, catalyzes the NADPH-dependent reduction of 7-cyano-7-deazaguanine (preQ0) to 7-aminomethyl-7-deazaguanine (preQ1). The polypeptide is NADPH-dependent 7-cyano-7-deazaguanine reductase (Shigella flexneri serotype 5b (strain 8401)).